The following is a 292-amino-acid chain: Polyamine aminopropyltransferase 1 (292 aa).

Residues 1 to 244 form the PABS domain; the sequence is MELGMFRLNI…YVNSFVFASD (244 aa). Gln-35 is a binding site for S-methyl-5'-thioadenosine. Spermidine-binding residues include His-66 and Glu-90. Residues Asp-110 and 142–143 each bind S-methyl-5'-thioadenosine; that span reads DG. Asp-163 (proton acceptor) is an active-site residue.

The protein belongs to the spermidine/spermine synthase family. Homodimer or homotetramer.

The protein resides in the cytoplasm. It catalyses the reaction norspermine + S-adenosyl 3-(methylsulfanyl)propylamine = caldopentamine + S-methyl-5'-thioadenosine + 2 H(+). The catalysed reaction is norspermidine + S-adenosyl 3-(methylsulfanyl)propylamine = norspermine + S-methyl-5'-thioadenosine + H(+). The enzyme catalyses S-adenosyl 3-(methylsulfanyl)propylamine + spermidine = thermospermine + S-methyl-5'-thioadenosine + H(+). In terms of biological role, involved in the biosynthesis of polyamines which are thought to support the growth of thermophilic microorganisms under high-temperature conditions. It seems that long-chain and branched-chain of polyamines effectively stabilize DNA and RNA, respectively. Catalyzes the irreversible transfer of a propylamine group from the amino donor S-adenosylmethioninamine (decarboxy-AdoMet) to norspermidine, spermidine and norspermine to yield norspermine, thermospermine and caldopentamine, respectively. It can also synthesize sym-norspermidine (bis(3-aminopropyl)amine) from 1,3-diaminopropane with a very low activity. The biosynthesis of caldohexamine and caldoheptamine from caldopentamine has been also observed. The polypeptide is Polyamine aminopropyltransferase 1 (Hyperthermus butylicus (strain DSM 5456 / JCM 9403 / PLM1-5)).